The primary structure comprises 130 residues: uncharacterized protein (130 aa).

A signal peptide spans 1–26 (MINNFKGILIIILSFLFLLLFKYSNA). An N-linked (GlcNAc...) asparagine glycan is attached at Asn-58.

It belongs to the Dictyostelium gerABC family.

The protein localises to the secreted. This is an uncharacterized protein from Dictyostelium discoideum (Social amoeba).